The primary structure comprises 75 residues: High-potential iron-sulfur protein (75 aa).

4 residues coordinate [4Fe-4S] cluster: C38, C41, C54, and C68.

In terms of assembly, homodimer. Monomer at different ionic strengths.

Specific class of high-redox-potential 4Fe-4S ferredoxins. Functions in anaerobic electron transport in most purple and in some other photosynthetic bacteria and in at least one genus (Paracoccus) of halophilic, denitrifying bacteria. Competent in photosynthetic electron transfer to oxidized cytochrome bc1 complex via the membrane-bound c-type tetraheme. In Rhodoferax fermentans, this protein is High-potential iron-sulfur protein (hip).